Reading from the N-terminus, the 230-residue chain is 7-cyano-7-deazaguanine synthase (230 aa).

10 to 20 (LSGGLDSATTA) contacts ATP. Zn(2+)-binding residues include C191, C199, C202, and C205.

Belongs to the QueC family. The cofactor is Zn(2+).

It carries out the reaction 7-carboxy-7-deazaguanine + NH4(+) + ATP = 7-cyano-7-deazaguanine + ADP + phosphate + H2O + H(+). The protein operates within purine metabolism; 7-cyano-7-deazaguanine biosynthesis. Catalyzes the ATP-dependent conversion of 7-carboxy-7-deazaguanine (CDG) to 7-cyano-7-deazaguanine (preQ(0)). This Gloeothece citriformis (strain PCC 7424) (Cyanothece sp. (strain PCC 7424)) protein is 7-cyano-7-deazaguanine synthase.